Here is a 252-residue protein sequence, read N- to C-terminus: Phosphoglycolate phosphatase (252 aa).

Asp-13 acts as the Nucleophile in catalysis. The Mg(2+) site is built by Asp-13, Asp-15, and Asp-192.

The protein belongs to the HAD-like hydrolase superfamily. CbbY/CbbZ/Gph/YieH family. In terms of assembly, monomer. Mg(2+) serves as cofactor. It depends on chloride as a cofactor.

It catalyses the reaction 2-phosphoglycolate + H2O = glycolate + phosphate. It participates in organic acid metabolism; glycolate biosynthesis; glycolate from 2-phosphoglycolate: step 1/1. Functionally, specifically catalyzes the dephosphorylation of 2-phosphoglycolate. Is involved in the dissimilation of the intracellular 2-phosphoglycolate formed during the DNA repair of 3'-phosphoglycolate ends, a major class of DNA lesions induced by oxidative stress. The polypeptide is Phosphoglycolate phosphatase (Escherichia coli O157:H7).